Reading from the N-terminus, the 85-residue chain is Putative membrane protein insertion efficiency factor (85 aa).

This sequence belongs to the UPF0161 family.

The protein localises to the cell inner membrane. Functionally, could be involved in insertion of integral membrane proteins into the membrane. In Escherichia coli O157:H7, this protein is Putative membrane protein insertion efficiency factor.